The chain runs to 97 residues: Large ribosomal subunit protein uL30m (97 aa).

The protein belongs to the universal ribosomal protein uL30 family. In terms of assembly, component of the mitochondrial large ribosomal subunit (mt-LSU). Mature yeast 74S mitochondrial ribosomes consist of a small (37S) and a large (54S) subunit. The 37S small subunit contains a 15S ribosomal RNA (15S mt-rRNA) and at least 32 different proteins. The 54S large subunit contains a 21S rRNA (21S mt-rRNA) and at least 45 different proteins.

Its subcellular location is the mitochondrion. Its function is as follows. Component of the mitochondrial ribosome (mitoribosome), a dedicated translation machinery responsible for the synthesis of mitochondrial genome-encoded proteins, including at least some of the essential transmembrane subunits of the mitochondrial respiratory chain. The mitoribosomes are attached to the mitochondrial inner membrane and translation products are cotranslationally integrated into the membrane. The polypeptide is Large ribosomal subunit protein uL30m (mrpl33) (Schizosaccharomyces pombe (strain 972 / ATCC 24843) (Fission yeast)).